Reading from the N-terminus, the 595-residue chain is MIGRTHHCGQLSEEQVNERVQLKGWVQRRRDLGQVIFVDLRDRSGVVQLVFNSDISQEALETAEKVRNEYVLDVEGVVLKRDPSTVNDKIATGTIEVHVERLTILNKAKSLPFQIEANTDASEDIRLKYRYLDLRRPDMQETMKLRHQTTKLIRDFLDGQEFFEIETPMLTKSTPEGARDYLVPSRVHHGEFYALPQSPQIFKQLLMVSGFERYYQIVRCFRDEDLRADRQPEFTQIDIETSFMDKEDLLTMTENMMAKIMKEVKGLDVALPFPRMTYDDAMNRYGSDKPDTRFEMELIELSDIVKDSDFKVFSSAIKSGGIVKGLNLKGGAGSLSRKEIDGLAEFVKPYGAKGLAWLKVEEGELKGPIAKFFAGETGAELQQAMGAEDGDLLFFAADKKEVVFDSLGALRLKLGKDFNLIDESKFNFLWVVDFPLVEYDEEAKRFVALHHPFTSPKQEDLTKLETDPASVRADAYDLVLNGYELGGGSQRIYQRPVQEKMFAALGFTEEAAQKEFGFLLEAFEYGTPPHGGIALGLDRLVMLLAGRLNLRDTIAFPKTASASCLLTEAPGEVSLEQLLDLNLSIIGHKPDKVNV.

Position 176 (Glu176) interacts with L-aspartate. An aspartate region spans residues 200-203 (QIFK). Residue Arg222 coordinates L-aspartate. ATP-binding positions include 222 to 224 (RDE) and Gln231. His450 serves as a coordination point for L-aspartate. Glu484 is an ATP binding site. Arg491 provides a ligand contact to L-aspartate. 536–539 (GLDR) is a binding site for ATP.

Belongs to the class-II aminoacyl-tRNA synthetase family. Type 1 subfamily. In terms of assembly, homodimer.

The protein resides in the cytoplasm. It carries out the reaction tRNA(Asp) + L-aspartate + ATP = L-aspartyl-tRNA(Asp) + AMP + diphosphate. Catalyzes the attachment of L-aspartate to tRNA(Asp) in a two-step reaction: L-aspartate is first activated by ATP to form Asp-AMP and then transferred to the acceptor end of tRNA(Asp). The chain is Aspartate--tRNA ligase from Halalkalibacterium halodurans (strain ATCC BAA-125 / DSM 18197 / FERM 7344 / JCM 9153 / C-125) (Bacillus halodurans).